Reading from the N-terminus, the 390-residue chain is MTGIRAIFYYFLVDLLTLLCWAQGKGGQHFGSTVVVSDVNLSNHGDQGSSEPPQTAEGCRGYFDVMGQWDPPFNCSSGEFLYCCGTCGFRYCCKFKQARLDQNTCTNYDRPVWLQPGKTPPKIDDPSHDPTRDKTNLIVYIICGVVAVMVLVGIFTKLGLEKAHRPQRENMSRALADVMRQQSHCATEHTERDPNLVIHVQHYETMPSRSSANNLHSSKINNVVPTSPHLPQMAHPHSYPTMGQISNPYEQQPPGKELNKYASLKAVAEKGNDDFYSKRRHLAELAAKGSLPLHPVRVDQERSYSPEGGTLKVNGQKAKANKIHTHPLASTYNPDYKTWDHSEHSLRRQAYATKKHCPVESVNEPLQSQNQHFMPSQPYFVTNSKTEVTV.

Positions 1–22 (MTGIRAIFYYFLVDLLTLLCWA) are cleaved as a signal peptide. Topologically, residues 23-134 (QGKGGQHFGS…DPSHDPTRDK (112 aa)) are extracellular. N-linked (GlcNAc...) asparagine glycosylation is found at N40 and N74. Residues 135–155 (TNLIVYIICGVVAVMVLVGIF) traverse the membrane as a helical segment. Residues 156–390 (TKLGLEKAHR…VTNSKTEVTV (235 aa)) are Cytoplasmic-facing.

The protein belongs to the shisa family. SHISA9 subfamily. Component of some AMPA receptors (ionotropic glutamate receptors) complex.

Its subcellular location is the cell projection. The protein resides in the dendritic spine membrane. The protein localises to the synapse. In terms of biological role, regulator of short-term neuronal synaptic plasticity in the dentate gyrus. Associates with AMPA receptors (ionotropic glutamate receptors) in synaptic spines and promotes AMPA receptor desensitization at excitatory synapses. This is Protein shisa-9 (shisa9) from Xenopus tropicalis (Western clawed frog).